A 199-amino-acid polypeptide reads, in one-letter code: Small ribosomal subunit protein uS4 (199 aa).

The S4 RNA-binding domain occupies 91–153; that stretch reads ARLDNVVYRM…SKNFVVIKEA (63 aa).

The protein belongs to the universal ribosomal protein uS4 family. Part of the 30S ribosomal subunit. Contacts protein S5. The interaction surface between S4 and S5 is involved in control of translational fidelity.

Functionally, one of the primary rRNA binding proteins, it binds directly to 16S rRNA where it nucleates assembly of the body of the 30S subunit. With S5 and S12 plays an important role in translational accuracy. The protein is Small ribosomal subunit protein uS4 of Exiguobacterium sibiricum (strain DSM 17290 / CCUG 55495 / CIP 109462 / JCM 13490 / 255-15).